The sequence spans 496 residues: Protein RepR (496 aa).

The DNA-binding element occupies 120 to 141; that stretch reads SDILTTAIDLGFMPTLIIKSDK.

Essential for replication. This is Protein RepR (repR) from Streptococcus agalactiae.